The following is a 548-amino-acid chain: Probable delta-1-pyrroline-5-carboxylate dehydrogenase (548 aa).

The Proton acceptor role is filled by E298. C332 serves as the catalytic Nucleophile. Phosphoserine is present on residues S391, S394, and S396.

It belongs to the aldehyde dehydrogenase family.

It catalyses the reaction L-glutamate 5-semialdehyde + NAD(+) + H2O = L-glutamate + NADH + 2 H(+). Its pathway is amino-acid degradation; L-proline degradation into L-glutamate; L-glutamate from L-proline: step 2/2. The polypeptide is Probable delta-1-pyrroline-5-carboxylate dehydrogenase (Schizosaccharomyces pombe (strain 972 / ATCC 24843) (Fission yeast)).